The sequence spans 312 residues: tRNA pseudouridine synthase B (312 aa).

Residue aspartate 49 is the Nucleophile of the active site.

The protein belongs to the pseudouridine synthase TruB family. Type 1 subfamily.

It carries out the reaction uridine(55) in tRNA = pseudouridine(55) in tRNA. In terms of biological role, responsible for synthesis of pseudouridine from uracil-55 in the psi GC loop of transfer RNAs. The sequence is that of tRNA pseudouridine synthase B from Chelativorans sp. (strain BNC1).